Reading from the N-terminus, the 444-residue chain is ATP-dependent protease ATPase subunit HslU (444 aa).

Residues Ile20 and 62–67 contribute to the ATP site; that span reads GVGKTE. The segment at 137–162 is disordered; sequence LVPPSRGTSGEPERGEDSNARQTFRK. ATP-binding residues include Asp257, Glu322, and Arg394.

This sequence belongs to the ClpX chaperone family. HslU subfamily. In terms of assembly, a double ring-shaped homohexamer of HslV is capped on each side by a ring-shaped HslU homohexamer. The assembly of the HslU/HslV complex is dependent on binding of ATP.

Its subcellular location is the cytoplasm. Its function is as follows. ATPase subunit of a proteasome-like degradation complex; this subunit has chaperone activity. The binding of ATP and its subsequent hydrolysis by HslU are essential for unfolding of protein substrates subsequently hydrolyzed by HslV. HslU recognizes the N-terminal part of its protein substrates and unfolds these before they are guided to HslV for hydrolysis. The chain is ATP-dependent protease ATPase subunit HslU from Bordetella petrii (strain ATCC BAA-461 / DSM 12804 / CCUG 43448).